The chain runs to 330 residues: Aspartate--ammonia ligase (330 aa).

It belongs to the class-II aminoacyl-tRNA synthetase family. AsnA subfamily.

Its subcellular location is the cytoplasm. The enzyme catalyses L-aspartate + NH4(+) + ATP = L-asparagine + AMP + diphosphate + H(+). Its pathway is amino-acid biosynthesis; L-asparagine biosynthesis; L-asparagine from L-aspartate (ammonia route): step 1/1. This is Aspartate--ammonia ligase from Shigella boydii serotype 18 (strain CDC 3083-94 / BS512).